Reading from the N-terminus, the 377-residue chain is MLSSCVRPVPTTVRFVDSLICNSSRSFMDLKALLSSLNDFASLSFAESWDNVGLLVEPSPPHTVNTLFLTNDLTEEVMEEVLQKKADLILSYHPPIFRPMKRITWNTWKERLVIRALENRVGIYSPHTAYDAAPQGVNNWLAKGLGACTSRPIHPSKAPNYPTEGNHRVEFNVNYTQDLDKVMSAVKGIDGVSVTSFSARTGNEEQTRINLNCTQKALMQVVDFLSRNKQLYQKTEILSLEKPLLLHTGMGRLCTLDESVSLATMIDRIKRHLKLSHIRLALGVGRTLESQVKVVALCAGSGSSVLQGVEADLYLTGEMSHHDTLDAASQGINVILCEHSNTERGFLSDLRDMLDSHLENKINIILSETDRDPLQVV.

Lys109 is subject to N6-acetyllysine. The interval 244–377 (LLLHTGMGRL…ETDRDPLQVV (134 aa)) is mediates interaction with COPS2. Thr255 is modified (phosphothreonine). Ser259 is modified (phosphoserine).

This sequence belongs to the GTP cyclohydrolase I type 2/NIF3 family. In terms of assembly, homodimer. Interacts with COPS2. Interacts with THOC7.

It localises to the cytoplasm. The protein localises to the nucleus. Its function is as follows. May function as a transcriptional corepressor through its interaction with COPS2, negatively regulating the expression of genes involved in neuronal differentiation. The polypeptide is NIF3-like protein 1 (Homo sapiens (Human)).